Reading from the N-terminus, the 101-residue chain is Small ribosomal subunit protein cS23 (101 aa).

The protein belongs to the chloroplast-specific ribosomal protein cS23 family. Part of the 30S ribosomal subunit.

The protein resides in the plastid. It localises to the chloroplast. Functionally, probably a ribosomal protein or a ribosome-associated protein. This Euglena myxocylindracea protein is Small ribosomal subunit protein cS23 (ycf65).